Reading from the N-terminus, the 218-residue chain is Large ribosomal subunit protein bL25 (218 aa).

It belongs to the bacterial ribosomal protein bL25 family. CTC subfamily. Part of the 50S ribosomal subunit; part of the 5S rRNA/L5/L18/L25 subcomplex. Contacts the 5S rRNA. Binds to the 5S rRNA independently of L5 and L18.

Functionally, this is one of the proteins that binds to the 5S RNA in the ribosome where it forms part of the central protuberance. The chain is Large ribosomal subunit protein bL25 from Gluconobacter oxydans (strain 621H) (Gluconobacter suboxydans).